The sequence spans 484 residues: Glycogen synthase (484 aa).

An ADP-alpha-D-glucose-binding site is contributed by Lys20.

The protein belongs to the glycosyltransferase 1 family. Bacterial/plant glycogen synthase subfamily.

It catalyses the reaction [(1-&gt;4)-alpha-D-glucosyl](n) + ADP-alpha-D-glucose = [(1-&gt;4)-alpha-D-glucosyl](n+1) + ADP + H(+). It functions in the pathway glycan biosynthesis; glycogen biosynthesis. In terms of biological role, synthesizes alpha-1,4-glucan chains using ADP-glucose. The sequence is that of Glycogen synthase from Vibrio atlanticus (strain LGP32) (Vibrio splendidus (strain Mel32)).